Consider the following 436-residue polypeptide: tRNA-2-methylthio-N(6)-dimethylallyladenosine synthase (436 aa).

An MTTase N-terminal domain is found at 5 to 121 (RKLFIKTYGC…LPDMLERTEG (117 aa)). C14, C50, C84, C158, C162, and C165 together coordinate [4Fe-4S] cluster. In terms of domain architecture, Radical SAM core spans 144–373 (ALRGPTAFLT…LGEQQRAAQA (230 aa)). Positions 373 to 435 (AAMVGRELGV…PNSLAGERIG (63 aa)) constitute a TRAM domain.

Belongs to the methylthiotransferase family. MiaB subfamily. As to quaternary structure, monomer. Requires [4Fe-4S] cluster as cofactor.

The protein resides in the cytoplasm. It carries out the reaction N(6)-dimethylallyladenosine(37) in tRNA + (sulfur carrier)-SH + AH2 + 2 S-adenosyl-L-methionine = 2-methylsulfanyl-N(6)-dimethylallyladenosine(37) in tRNA + (sulfur carrier)-H + 5'-deoxyadenosine + L-methionine + A + S-adenosyl-L-homocysteine + 2 H(+). Catalyzes the methylthiolation of N6-(dimethylallyl)adenosine (i(6)A), leading to the formation of 2-methylthio-N6-(dimethylallyl)adenosine (ms(2)i(6)A) at position 37 in tRNAs that read codons beginning with uridine. The chain is tRNA-2-methylthio-N(6)-dimethylallyladenosine synthase from Cereibacter sphaeroides (strain ATCC 17025 / ATH 2.4.3) (Rhodobacter sphaeroides).